A 130-amino-acid polypeptide reads, in one-letter code: Small ribosomal subunit protein uS8 (130 aa).

It belongs to the universal ribosomal protein uS8 family. As to quaternary structure, part of the 30S ribosomal subunit. Contacts proteins S5 and S12.

One of the primary rRNA binding proteins, it binds directly to 16S rRNA central domain where it helps coordinate assembly of the platform of the 30S subunit. The sequence is that of Small ribosomal subunit protein uS8 from Wigglesworthia glossinidia brevipalpis.